The sequence spans 713 residues: Endopolyphosphatase (713 aa).

Topologically, residues 1–19 (MSVLIDEKSHRSSGSTRSR) are cytoplasmic. The chain crosses the membrane as a helical; Signal-anchor for type II membrane protein span at residues 20 to 40 (IVVTVVGVLLMVSGLAVMLGH). Residues 41-713 (QSGSANEALG…SSEYENMGMG (673 aa)) are Vacuolar-facing. Residues 399 to 418 (SDDDDNSDSDSDDDDEDTSL) show a composition bias toward acidic residues. Residues 399 to 430 (SDDDDNSDSDSDDDDEDTSLEESYSNFNSPIL) are disordered. Asparagine 507 and asparagine 645 each carry an N-linked (GlcNAc...) asparagine glycan. The segment covering 640–659 (VKEKKNKSNKKSKKKKKNKD) has biased composition (basic residues). The disordered stretch occupies residues 640-684 (VKEKKNKSNKKSKKKKKNKDKRLLENSEPLKQDGSKDSRLEQDRV). The span at 660 to 683 (KRLLENSEPLKQDGSKDSRLEQDR) shows a compositional bias: basic and acidic residues.

It belongs to the endopolyphosphatase PPN1 family. A divalent metal cation serves as cofactor. In terms of processing, processing by proteases in the vacuole may be required for activation.

The protein localises to the vacuole membrane. It catalyses the reaction [phosphate](n+1) + n H2O = (n+1) phosphate + n H(+). Functionally, catalyzes the hydrolysis of inorganic polyphosphate (polyP) chains of many hundreds of phosphate residues into shorter lengths. This is Endopolyphosphatase (PPN1) from Debaryomyces hansenii (strain ATCC 36239 / CBS 767 / BCRC 21394 / JCM 1990 / NBRC 0083 / IGC 2968) (Yeast).